We begin with the raw amino-acid sequence, 276 residues long: NH(3)-dependent NAD(+) synthetase (276 aa).

46–53 is an ATP binding site; it reads GISGGQDS. Residue D52 participates in Mg(2+) binding. R141 contacts deamido-NAD(+). T161 lines the ATP pocket. Position 166 (E166) interacts with Mg(2+). Deamido-NAD(+) contacts are provided by K174 and D181. ATP is bound by residues K190 and T212. 261 to 262 provides a ligand contact to deamido-NAD(+); it reads HK.

The protein belongs to the NAD synthetase family. In terms of assembly, homodimer.

It carries out the reaction deamido-NAD(+) + NH4(+) + ATP = AMP + diphosphate + NAD(+) + H(+). It functions in the pathway cofactor biosynthesis; NAD(+) biosynthesis; NAD(+) from deamido-NAD(+) (ammonia route): step 1/1. Catalyzes the ATP-dependent amidation of deamido-NAD to form NAD. Uses ammonia as a nitrogen source. The polypeptide is NH(3)-dependent NAD(+) synthetase (Limosilactobacillus fermentum (strain NBRC 3956 / LMG 18251) (Lactobacillus fermentum)).